Here is a 317-residue protein sequence, read N- to C-terminus: D-alanine--D-alanine ligase (317 aa).

An ATP-grasp domain is found at 103–299 (KHIFRSLNID…FNELVKIIIE (197 aa)). 130–183 (KIDYPYVLKPINEGSSIGVYIIFSHEDYLELKDNSSTIMEKMIVEEYIPGIELH) is an ATP binding site. Mg(2+) is bound by residues Asp251, Glu265, and Asn267.

It belongs to the D-alanine--D-alanine ligase family. It depends on Mg(2+) as a cofactor. Mn(2+) serves as cofactor.

The protein localises to the cytoplasm. The catalysed reaction is 2 D-alanine + ATP = D-alanyl-D-alanine + ADP + phosphate + H(+). It functions in the pathway cell wall biogenesis; peptidoglycan biosynthesis. Functionally, cell wall formation. The sequence is that of D-alanine--D-alanine ligase from Wolbachia sp. subsp. Drosophila simulans (strain wRi).